Here is a 363-residue protein sequence, read N- to C-terminus: Phosphate acyltransferase (363 aa).

The segment at 326 to 363 is disordered; it reads ADSHPSKVNAGENAPPLASASNPSPEALPVGSLDRVEG. Positions 337-354 are enriched in low complexity; it reads ENAPPLASASNPSPEALP.

It belongs to the PlsX family. As to quaternary structure, homodimer. Probably interacts with PlsY.

It is found in the cytoplasm. It catalyses the reaction a fatty acyl-[ACP] + phosphate = an acyl phosphate + holo-[ACP]. It participates in lipid metabolism; phospholipid metabolism. Its function is as follows. Catalyzes the reversible formation of acyl-phosphate (acyl-PO(4)) from acyl-[acyl-carrier-protein] (acyl-ACP). This enzyme utilizes acyl-ACP as fatty acyl donor, but not acyl-CoA. The polypeptide is Phosphate acyltransferase (Synechococcus sp. (strain JA-3-3Ab) (Cyanobacteria bacterium Yellowstone A-Prime)).